A 218-amino-acid chain; its full sequence is Protein-L-isoaspartate O-methyltransferase (218 aa).

Residue Ser69 is part of the active site.

Belongs to the methyltransferase superfamily. L-isoaspartyl/D-aspartyl protein methyltransferase family.

Its subcellular location is the cytoplasm. It carries out the reaction [protein]-L-isoaspartate + S-adenosyl-L-methionine = [protein]-L-isoaspartate alpha-methyl ester + S-adenosyl-L-homocysteine. In terms of biological role, catalyzes the methyl esterification of L-isoaspartyl residues in peptides and proteins that result from spontaneous decomposition of normal L-aspartyl and L-asparaginyl residues. It plays a role in the repair and/or degradation of damaged proteins. This Aromatoleum aromaticum (strain DSM 19018 / LMG 30748 / EbN1) (Azoarcus sp. (strain EbN1)) protein is Protein-L-isoaspartate O-methyltransferase.